The chain runs to 155 residues: MSIKLNALFSDSYVDVSQYRDQHFKGNRYEQEKLLKQSATLYVGNLSFYTTEEQVHELFAKCGDVKRIIIGLDKIKKTACGFCFVEYYTRADAENAMRFVNGTRLDDRIIRTDWDAGFKEGRQYGRGKSGGQVRDEYRQDYDPARGGYGKMVQKS.

MRNA is bound by residues tyrosine 19, tyrosine 42, 111–115, 122–126, and 132–133; these read RTDWD, RQYGR, and QV. The RRM domain occupies 39-117; it reads ATLYVGNLSF…RIIRTDWDAG (79 aa). Residues 121 to 155 are disordered; it reads GRQYGRGKSGGQVRDEYRQDYDPARGGYGKMVQKS. Positions 133 to 143 are enriched in basic and acidic residues; sequence VRDEYRQDYDP.

Belongs to the RRM NCBP2 family. Component of the nuclear cap-binding complex (CBC), a heterodimer composed of ncbp1/cbp80 and ncbp2/cbp20 that interacts with m7GpppG-capped RNA.

It localises to the nucleus. The protein localises to the cytoplasm. In terms of biological role, component of the cap-binding complex (CBC), which binds co-transcriptionally to the 5' cap of pre-mRNAs and is involved in various processes such as pre-mRNA splicing, translation regulation, nonsense-mediated mRNA decay, RNA-mediated gene silencing (RNAi) by microRNAs (miRNAs) and mRNA export. The CBC complex is involved in mRNA export from the nucleus, leading to the recruitment of the mRNA export machinery to the 5' end of mRNA and to mRNA export in a 5' to 3' direction through the nuclear pore. The CBC complex is also involved in mediating U snRNA and intronless mRNAs export from the nucleus. The CBC complex is essential for a pioneer round of mRNA translation, before steady state translation when the CBC complex is replaced by cytoplasmic cap-binding protein eIF4E. The pioneer round of mRNA translation mediated by the CBC complex plays a central role in nonsense-mediated mRNA decay (NMD), NMD only taking place in mRNAs bound to the CBC complex, but not on eIF4E-bound mRNAs. The CBC complex enhances NMD in mRNAs containing at least one exon-junction complex (EJC), promoting the interaction between upf1 and upf2. The CBC complex is also involved in 'failsafe' NMD, which is independent of the EJC complex, while it does not participate in Staufen-mediated mRNA decay (SMD). During cell proliferation, the CBC complex is also involved in microRNAs (miRNAs) biogenesis via its interaction with srrt/ars2, thereby being required for miRNA-mediated RNA interference. The CBC complex also acts as a negative regulator of parn, thereby acting as an inhibitor of mRNA deadenylation. In the CBC complex, ncbp2/cbp20 recognizes and binds capped RNAs (m7GpppG-capped RNA) but requires ncbp1/cbp80 to stabilize the movement of its N-terminal loop and lock the CBC into a high affinity cap-binding state with the cap structure. The conventional cap-binding complex with NCBP2 binds both small nuclear RNA (snRNA) and messenger (mRNA) and is involved in their export from the nucleus. The protein is Nuclear cap-binding protein subunit 2 (ncbp2) of Danio rerio (Zebrafish).